The chain runs to 328 residues: MRRHKEVNFVAYLLFSLLVLVSAALAQNCGSQGGGKACASGQCCSKFGWCGNTNDYCGSGNCQSQCPGGGPGPGPGGDLGSAISNSMFDQMLKHRNENSCQGKNFYSYNAFINAARSFPGFGTSGDINARKREIAAFFAQTSHETTGGWASAPDGPYAWGYCFLRERGNPGDYCPPSSQWPCAPGRKYFGRGPIQISHNYNYGPCGRAIGVDLLNNPDLVATDPVISFKTALWFWMTPQSPKPSCHDVIIGRWNPSSADRAANRLPGFGVITNIINGGLECGRGTDNRVQDRIGFYRRYCSILGVTPGDNLDCVNQRWFGNALLVDTL.

The first 26 residues, 1-26, serve as a signal peptide directing secretion; it reads MRRHKEVNFVAYLLFSLLVLVSAALA. Positions 27 to 68 constitute a Chitin-binding type-1 domain; that stretch reads QNCGSQGGGKACASGQCCSKFGWCGNTNDYCGSGNCQSQCPG. 7 cysteine pairs are disulfide-bonded: Cys29/Cys44, Cys38/Cys50, Cys43/Cys57, Cys62/Cys66, Cys100/Cys162, Cys174/Cys182, and Cys281/Cys313. The active-site Proton donor is Glu144. A propeptide spans 322 to 328 (removed in mature form); sequence ALLVDTL.

The protein belongs to the glycosyl hydrolase 19 family. Chitinase class I subfamily.

It localises to the vacuole. The catalysed reaction is Random endo-hydrolysis of N-acetyl-beta-D-glucosaminide (1-&gt;4)-beta-linkages in chitin and chitodextrins.. Functionally, defense against chitin-containing fungal pathogens. The protein is Endochitinase of Solanum tuberosum (Potato).